Consider the following 309-residue polypeptide: Methionyl-tRNA formyltransferase (309 aa).

109–112 (SLLP) serves as a coordination point for (6S)-5,6,7,8-tetrahydrofolate.

Belongs to the Fmt family.

The enzyme catalyses L-methionyl-tRNA(fMet) + (6R)-10-formyltetrahydrofolate = N-formyl-L-methionyl-tRNA(fMet) + (6S)-5,6,7,8-tetrahydrofolate + H(+). Its function is as follows. Attaches a formyl group to the free amino group of methionyl-tRNA(fMet). The formyl group appears to play a dual role in the initiator identity of N-formylmethionyl-tRNA by promoting its recognition by IF2 and preventing the misappropriation of this tRNA by the elongation apparatus. This Chloroflexus aggregans (strain MD-66 / DSM 9485) protein is Methionyl-tRNA formyltransferase.